The following is a 149-amino-acid chain: Calmodulin (149 aa).

Ala2 bears the N-acetylalanine mark. EF-hand domains follow at residues 8 to 43 (EQIAEFKEAFSLFDKDGDGTITTKELGTVMRSLGQN), 44 to 79 (PTEAELQDMINEVDSDGNGTIDFPEFLSLMARKMKD), 81 to 116 (DTEEELIEAFKVFDRDGNGFISAAELRHVMTNLGEK), and 117 to 149 (LTDEEVDEMIREADVDGDGQINYEEFVKMMMAK). The Ca(2+) site is built by Asp21, Asp23, Asp25, Thr27, Glu32, Asp57, Asp59, Asn61, Thr63, Glu68, Asp94, Asp96, Asn98, and Glu105. Lys116 carries the post-translational modification N6,N6,N6-trimethyllysine. The Ca(2+) site is built by Asp130, Asp132, Asp134, Gln136, and Glu141.

The protein belongs to the calmodulin family.

Calmodulin mediates the control of a large number of enzymes, ion channels and other proteins by Ca(2+). Among the enzymes to be stimulated by the calmodulin-Ca(2+) complex are a number of protein kinases and phosphatases. This Heterocapsa triquetra (Dinoflagellate) protein is Calmodulin.